Here is a 334-residue protein sequence, read N- to C-terminus: Cytoskeleton protein RodZ (334 aa).

Over 1-111 (MNTEATHDQN…LGKRRKKRDG (111 aa)) the chain is Cytoplasmic. The HTH cro/C1-type domain occupies 19 to 71 (LRNAREQLGLSQQAVAERLCLKVSTVRDIEEDKAPSDLASTFLRGYIRSYARL). A DNA-binding region (H-T-H motif) is located at residues 30-49 (QQAVAERLCLKVSTVRDIEE). A helical; Signal-anchor for type II membrane protein transmembrane segment spans residues 112-132 (WLMSFTWLVLFVVVGLTGAWW). Residues 133 to 334 (WQNHKAQQEE…TLNAEPTPAQ (202 aa)) are Periplasmic-facing. The interval 155–241 (NADKDSGQSV…PSALPTSQAG (87 aa)) is disordered. Low complexity-rich tracts occupy residues 170 to 211 (AATS…TVVA) and 219 to 241 (TAATSAAPAATETPSALPTSQAG).

Belongs to the RodZ family.

It is found in the cell inner membrane. In terms of biological role, cytoskeletal protein that is involved in cell-shape control through regulation of the length of the long axis. In Salmonella agona (strain SL483), this protein is Cytoskeleton protein RodZ.